We begin with the raw amino-acid sequence, 184 residues long: dTTP/UTP pyrophosphatase (184 aa).

Asp-67 serves as the catalytic Proton acceptor.

It belongs to the Maf family. YhdE subfamily. It depends on a divalent metal cation as a cofactor.

Its subcellular location is the cytoplasm. The enzyme catalyses dTTP + H2O = dTMP + diphosphate + H(+). It carries out the reaction UTP + H2O = UMP + diphosphate + H(+). Its function is as follows. Nucleoside triphosphate pyrophosphatase that hydrolyzes dTTP and UTP. May have a dual role in cell division arrest and in preventing the incorporation of modified nucleotides into cellular nucleic acids. The chain is dTTP/UTP pyrophosphatase from Elusimicrobium minutum (strain Pei191).